The following is a 224-amino-acid chain: ATP-dependent dethiobiotin synthetase BioD (224 aa).

An ATP-binding site is contributed by 13–18 (NVGKTI). T17 serves as a coordination point for Mg(2+). K38 is an active-site residue. S42 is a binding site for substrate. ATP contacts are provided by residues D55, 116–119 (EGAG), 176–177 (NN), and N211. Mg(2+)-binding residues include D55 and E116.

Belongs to the dethiobiotin synthetase family. As to quaternary structure, homodimer. Mg(2+) serves as cofactor.

Its subcellular location is the cytoplasm. The enzyme catalyses (7R,8S)-7,8-diammoniononanoate + CO2 + ATP = (4R,5S)-dethiobiotin + ADP + phosphate + 3 H(+). The protein operates within cofactor biosynthesis; biotin biosynthesis; biotin from 7,8-diaminononanoate: step 1/2. In terms of biological role, catalyzes a mechanistically unusual reaction, the ATP-dependent insertion of CO2 between the N7 and N8 nitrogen atoms of 7,8-diaminopelargonic acid (DAPA, also called 7,8-diammoniononanoate) to form a ureido ring. The protein is ATP-dependent dethiobiotin synthetase BioD of Buchnera aphidicola subsp. Acyrthosiphon pisum (strain 5A).